Reading from the N-terminus, the 516-residue chain is Maturase K (516 aa).

This sequence belongs to the intron maturase 2 family. MatK subfamily.

Its subcellular location is the plastid. The protein localises to the chloroplast. Usually encoded in the trnK tRNA gene intron. Probably assists in splicing its own and other chloroplast group II introns. The protein is Maturase K of Chara vulgaris (Common stonewort).